The sequence spans 444 residues: Adenylosuccinate synthetase (444 aa).

Residues 12-18 and 40-42 contribute to the GTP site; these read GDEGKGK and GHT. Residue aspartate 13 is the Proton acceptor of the active site. 2 residues coordinate Mg(2+): aspartate 13 and glycine 40. Residues 13 to 16, 38 to 41, threonine 128, arginine 142, glutamine 223, threonine 238, and arginine 302 each bind IMP; these read DEGK and NAGH. Histidine 41 functions as the Proton donor in the catalytic mechanism. 298–304 lines the substrate pocket; the sequence is TTTGRRR. GTP contacts are provided by residues arginine 304, 330–332, and 412–414; these read KLD and SLG.

This sequence belongs to the adenylosuccinate synthetase family. In terms of assembly, homodimer. The cofactor is Mg(2+).

Its subcellular location is the cytoplasm. The enzyme catalyses IMP + L-aspartate + GTP = N(6)-(1,2-dicarboxyethyl)-AMP + GDP + phosphate + 2 H(+). Its pathway is purine metabolism; AMP biosynthesis via de novo pathway; AMP from IMP: step 1/2. Its function is as follows. Plays an important role in the de novo pathway of purine nucleotide biosynthesis. Catalyzes the first committed step in the biosynthesis of AMP from IMP. This Synechococcus elongatus (strain ATCC 33912 / PCC 7942 / FACHB-805) (Anacystis nidulans R2) protein is Adenylosuccinate synthetase.